We begin with the raw amino-acid sequence, 105 residues long: Urease subunit beta (105 aa).

It belongs to the urease beta subunit family. In terms of assembly, heterotrimer of UreA (gamma), UreB (beta) and UreC (alpha) subunits. Three heterotrimers associate to form the active enzyme.

It is found in the cytoplasm. It carries out the reaction urea + 2 H2O + H(+) = hydrogencarbonate + 2 NH4(+). It functions in the pathway nitrogen metabolism; urea degradation; CO(2) and NH(3) from urea (urease route): step 1/1. The chain is Urease subunit beta from Pseudomonas putida (strain W619).